We begin with the raw amino-acid sequence, 187 residues long: Elongation factor P (187 aa).

This sequence belongs to the elongation factor P family.

It localises to the cytoplasm. It participates in protein biosynthesis; polypeptide chain elongation. Functionally, involved in peptide bond synthesis. Stimulates efficient translation and peptide-bond synthesis on native or reconstituted 70S ribosomes in vitro. Probably functions indirectly by altering the affinity of the ribosome for aminoacyl-tRNA, thus increasing their reactivity as acceptors for peptidyl transferase. The polypeptide is Elongation factor P (Helicobacter pylori (strain G27)).